Reading from the N-terminus, the 637-residue chain is 3D-(3,5/4)-trihydroxycyclohexane-1,2-dione hydrolase (637 aa).

E66 is a thiamine diphosphate binding site. Residues 442 to 522 are thiamine pyrophosphate binding; that stretch reads SLPGDLQRLW…INVLLFDNSG (81 aa). D493 and N520 together coordinate Mg(2+).

Belongs to the TPP enzyme family. Mg(2+) is required as a cofactor. Requires thiamine diphosphate as cofactor.

It catalyses the reaction 3D-3,5/4-trihydroxycyclohexane-1,2-dione + H2O = 5-deoxy-D-glucuronate + H(+). It functions in the pathway polyol metabolism; myo-inositol degradation into acetyl-CoA; acetyl-CoA from myo-inositol: step 3/7. Involved in the cleavage of the C1-C2 bond of 3D-(3,5/4)-trihydroxycyclohexane-1,2-dione (THcHDO) to yield 5-deoxy-glucuronate (5DG). The sequence is that of 3D-(3,5/4)-trihydroxycyclohexane-1,2-dione hydrolase from Bacillus licheniformis (strain ATCC 14580 / DSM 13 / JCM 2505 / CCUG 7422 / NBRC 12200 / NCIMB 9375 / NCTC 10341 / NRRL NRS-1264 / Gibson 46).